The chain runs to 100 residues: Small ribosomal subunit protein uS14c (100 aa).

Belongs to the universal ribosomal protein uS14 family. In terms of assembly, part of the 30S ribosomal subunit.

It is found in the plastid. The protein resides in the chloroplast. In terms of biological role, binds 16S rRNA, required for the assembly of 30S particles. This Gossypium barbadense (Sea Island cotton) protein is Small ribosomal subunit protein uS14c.